A 219-amino-acid chain; its full sequence is MSIQVFCDFDGTITNNDNIMSIMEKFAPPEAEEVKNRILSQELSIQEGVSQLFQLIPTNLHDEIIQFLIETAEIRNGFHEFIQFVNENNISFYVISGGMDFFVYPLLQGLIPKEQIYCNETDFSNEYITVNWPHPCDRLCQNHCGLCKSSLIRKLSDTNDFHIVIGDSITDLQAAKQADKVFARDFLITKCEENHISYTPFETFHDVQTELKHLLGVKL.

This sequence belongs to the HAD-like hydrolase superfamily. MtnX family.

It carries out the reaction 2-hydroxy-5-methylsulfanyl-3-oxopent-1-enyl phosphate + H2O = 1,2-dihydroxy-5-(methylsulfanyl)pent-1-en-3-one + phosphate. Its pathway is amino-acid biosynthesis; L-methionine biosynthesis via salvage pathway; L-methionine from S-methyl-5-thio-alpha-D-ribose 1-phosphate: step 4/6. In terms of biological role, dephosphorylates 2-hydroxy-3-keto-5-methylthiopentenyl-1-phosphate (HK-MTPenyl-1-P) yielding 1,2-dihydroxy-3-keto-5-methylthiopentene (DHK-MTPene). The chain is 2-hydroxy-3-keto-5-methylthiopentenyl-1-phosphate phosphatase from Bacillus cereus (strain ZK / E33L).